We begin with the raw amino-acid sequence, 145 residues long: uncharacterized protein (145 aa).

Residues 1 to 23 (MSSSNLSSRKTRISAHFLDAAPA) form the signal peptide. A helical membrane pass occupies residues 123–140 (VLLLIIALVFLLFVAIFI).

The protein resides in the membrane. This is an uncharacterized protein from Archaeoglobus fulgidus (strain ATCC 49558 / DSM 4304 / JCM 9628 / NBRC 100126 / VC-16).